The following is a 250-amino-acid chain: MVLTGVTSKAIRKGDAEPPLSKGSFRVYNMRFCPWAERAMLYVAAKGIEAEVVNLNVTDKLEWYWTKHYQGKAPAVEHNGKVVIESGFIPEYLDDAFPETRILPTDPYEKVQQKLLADRLTAVAHAVPLLFAVMRDRTLKDEKQRKVFEVLKQAENLLANDFYAGSQPGYPDYLSFPFFEKIWWSASLDGVVDLPTIEFPGEEEYPKLTKWFQKMISSDVVQSVTQSLEHGAAFMNAYATHQELNYDLGL.

One can recognise a GST N-terminal domain in the interval 21–101 (SKGSFRVYNM…YLDDAFPETR (81 aa)). Cys33 acts as the Nucleophile in catalysis. Glutathione contacts are provided by residues Lys60 and 85 to 86 (ES). A GST C-terminal domain is found at 106–234 (DPYEKVQQKL…TQSLEHGAAF (129 aa)).

This sequence belongs to the GST superfamily. Omega family. As to quaternary structure, homodimer. Expressed in the intestinal cells.

It localises to the cytoplasm. It carries out the reaction RX + glutathione = an S-substituted glutathione + a halide anion + H(+). The catalysed reaction is L-dehydroascorbate + 2 glutathione = glutathione disulfide + L-ascorbate. The enzyme catalyses methylarsonate + 2 glutathione + H(+) = methylarsonous acid + glutathione disulfide + H2O. Functionally, exhibits glutathione-dependent thiol transferase activity. Has dehydroascorbate reductase activity and may contribute to the recycling of ascorbic acid. Participates in the biotransformation of inorganic arsenic and reduces monomethylarsonic acid (MMA). Protects against environmental stress and oxidative stress. The polypeptide is Glutathione transferase omega-1 (gsto-1) (Caenorhabditis elegans).